The following is a 544-amino-acid chain: Esterase-6 (544 aa).

The signal sequence occupies residues 1–21; the sequence is MNYVGLGLIIVLSCLWLGSNA. An N-linked (GlcNAc...) asparagine glycan is attached at Asn42. Cys86 and Cys105 are disulfide-bonded. The active-site Acyl-ester intermediate is Ser209. Cysteines 261 and 273 form a disulfide. N-linked (GlcNAc...) asparagine glycans are attached at residues Asn420 and Asn456. His466 serves as the catalytic Charge relay system. N-linked (GlcNAc...) asparagine glycosylation occurs at Asn506. Cys514 and Cys535 are disulfide-bonded.

The protein belongs to the type-B carboxylesterase/lipase family. Monomer. In terms of tissue distribution, specifically expressed in the ejaculatory bulbs of male.

It is found in the secreted. It carries out the reaction a carboxylic ester + H2O = an alcohol + a carboxylate + H(+). In terms of biological role, transferred from the ejaculatory bulbs of males to the female genitals upon copulation, plays an important role in the reproductive biology. The chain is Esterase-6 (Est-6) from Drosophila melanogaster (Fruit fly).